A 269-amino-acid chain; its full sequence is Hydroxyethylthiazole kinase (269 aa).

Residue methionine 46 participates in substrate binding. Residues arginine 121 and threonine 166 each coordinate ATP. Substrate is bound at residue glycine 193.

This sequence belongs to the Thz kinase family. Requires Mg(2+) as cofactor.

It carries out the reaction 5-(2-hydroxyethyl)-4-methylthiazole + ATP = 4-methyl-5-(2-phosphooxyethyl)-thiazole + ADP + H(+). It functions in the pathway cofactor biosynthesis; thiamine diphosphate biosynthesis; 4-methyl-5-(2-phosphoethyl)-thiazole from 5-(2-hydroxyethyl)-4-methylthiazole: step 1/1. Functionally, catalyzes the phosphorylation of the hydroxyl group of 4-methyl-5-beta-hydroxyethylthiazole (THZ). The polypeptide is Hydroxyethylthiazole kinase (Limosilactobacillus reuteri (strain DSM 20016) (Lactobacillus reuteri)).